Consider the following 66-residue polypeptide: Large ribosomal subunit protein bL35 (66 aa).

The interval 1 to 42 (MPKQKTHRASAKRFKRTANGGLKRHHAYTGHRFHGKTKKQRR) is disordered.

This sequence belongs to the bacterial ribosomal protein bL35 family.

This is Large ribosomal subunit protein bL35 from Lactobacillus gasseri (strain ATCC 33323 / DSM 20243 / BCRC 14619 / CIP 102991 / JCM 1131 / KCTC 3163 / NCIMB 11718 / NCTC 13722 / AM63).